A 560-amino-acid polypeptide reads, in one-letter code: Choline/ethanolamine transporter FLVCR1 (560 aa).

The segment at 1–43 is disordered; that stretch reads MARPDDEVGPAVAPGHPLGKGYLPVPKGAPDGEARLVPQNGPE. Residues 1–92 lie on the Cytoplasmic side of the membrane; that stretch reads MARPDDEVGP…EDVPCPACPP (92 aa). A helical transmembrane segment spans residues 93-117; it reads RTALSPRRFVVLLIFSLYSLVNAFQ. The Extracellular segment spans residues 118-135; it reads WIQYSSISNVFEDFYEVS. The chain crosses the membrane as a helical span at residues 136-163; it reads PLHINWLSMVYMVAYVPLIFPATWLLDT. The Cytoplasmic segment spans residues 164 to 165; the sequence is RG. Residues 166–185 form a helical membrane-spanning segment; the sequence is LRLTALLGSGLNCLGAWVKC. The Extracellular segment spans residues 186 to 192; it reads GSVQRHL. Residues 193 to 221 traverse the membrane as a helical segment; it reads FWVTMLGQILCSVAQVFILGLPSPVASVW. Glutamine 207 contacts ethanolamine. Topologically, residues 222–226 are cytoplasmic; the sequence is FGPKE. The helical transmembrane segment at 227-252 threads the bilayer; it reads VSTACATAVLGNQLGTAVGFLLPPVL. The Extracellular segment spans residues 253–270; sequence VPALGTQNNTGLLAHTQN. N-linked (GlcNAc...) asparagine glycosylation is present at asparagine 270. A helical membrane pass occupies residues 271–300; the sequence is NTDLLAHNINTMFYGTAFISTFLFFLTVIA. Topologically, residues 301–336 are cytoplasmic; that stretch reads FKEKPPLPPSQAQAILRDSPPEEYSYKSSIWNLCRN. A helical membrane pass occupies residues 337 to 367; it reads IPFVLLLVSYGIMTGAFYSISTLLNQIILTY. Topologically, residues 368–371 are extracellular; that stretch reads YVGE. A helical transmembrane segment spans residues 372-400; that stretch reads EVNAGRIGLTLVVAGMVGSILCGLWLDYT. Residues 401-402 are Cytoplasmic-facing; the sequence is KT. Residues 403-425 form a helical membrane-spanning segment; it reads YKQTTLIVYVLSFIGMLIFTFTL. At 426 to 428 the chain is on the extracellular side; that stretch reads NLG. The helical transmembrane segment at 429–458 threads the bilayer; sequence YIVALFFTGGILGFFMTGYLPLGFEFAVEI. Residues 459 to 466 are Cytoplasmic-facing; sequence TYPESEGM. The helical transmembrane segment at 467–492 threads the bilayer; the sequence is SSGLLNTAAQILGIFFTLAQGKITTD. Glutamine 476 contacts ethanolamine. Glutamine 476 is a binding site for choline. Topologically, residues 493–495 are extracellular; it reads YNS. A helical transmembrane segment spans residues 496-518; it reads PEAGNIFLCAWMFVGIILTALIK. At 519–560 the chain is on the cytoplasmic side; the sequence is SDLRRHNINTGLTNIDVKAVPVDSRVDPKPKAMVSIQSESSL. At serine 542 the chain carries Phosphoserine.

It belongs to the major facilitator superfamily. Feline leukemia virus subgroup C receptor (TC 2.A.1.28.1) family.

Its subcellular location is the cell membrane. It catalyses the reaction choline(out) = choline(in). The catalysed reaction is ethanolamine(in) = ethanolamine(out). It carries out the reaction heme b(in) = heme b(out). Its function is as follows. Uniporter that mediates the transport of extracellular choline and ethanolamine into cells, thereby playing a key role in phospholipid biosynthesis. Choline and ethanolamine are the precursors of phosphatidylcholine and phosphatidylethanolamine, respectively, the two most abundant phospholipids. Transport is not coupled with proton transport and is exclusively driven by the choline (or ethanolamine) gradient across the plasma membrane. Also acts as a heme b transporter that mediates heme efflux from the cytoplasm to the extracellular compartment. The sequence is that of Choline/ethanolamine transporter FLVCR1 (Flvcr1) from Mus terricolor (Earth-colored mouse).